A 316-amino-acid polypeptide reads, in one-letter code: MLEQPYLDLAKKVLDEGHFKPDRTHTGTYSIFGHQMRFDLSKGFPLLTTKKVPFGLIKSELLWFLHGDTNIRFLLQHRNHIWDEWAFEKWVKSDEYHGPDMTDFGHRSQKDPEFAAVYHEEMAKFDDRVLHDDAFAAKYGDLGLVYGSQWRAWHTSKGDTIDQLGDVIEQIKTHPYSRRLIVSAWNPEDVPTMALPPCHTLYQFYVNDGKLSLQLYQRSADIFLGVPFNIASYALLTHLVAHECGLEVGEFIHTFGDAHLYVNHLDQIKEQLSRTPRPAPTLQLNPDKHDIFDFDMKDIKLLNYDPYPAIKAPVAV.

DUMP contacts are provided by residues R23 and 178 to 179 (RR). C198 serves as the catalytic Nucleophile. DUMP contacts are provided by residues 218 to 221 (RSAD), N229, and 259 to 261 (HLY). D221 is a (6R)-5,10-methylene-5,6,7,8-tetrahydrofolate binding site. A315 serves as a coordination point for (6R)-5,10-methylene-5,6,7,8-tetrahydrofolate.

This sequence belongs to the thymidylate synthase family. Bacterial-type ThyA subfamily. In terms of assembly, homodimer.

It localises to the cytoplasm. The catalysed reaction is dUMP + (6R)-5,10-methylene-5,6,7,8-tetrahydrofolate = 7,8-dihydrofolate + dTMP. It functions in the pathway pyrimidine metabolism; dTTP biosynthesis. Catalyzes the reductive methylation of 2'-deoxyuridine-5'-monophosphate (dUMP) to 2'-deoxythymidine-5'-monophosphate (dTMP) while utilizing 5,10-methylenetetrahydrofolate (mTHF) as the methyl donor and reductant in the reaction, yielding dihydrofolate (DHF) as a by-product. This enzymatic reaction provides an intracellular de novo source of dTMP, an essential precursor for DNA biosynthesis. The polypeptide is Thymidylate synthase (Lacticaseibacillus casei (Lactobacillus casei)).